A 431-amino-acid chain; its full sequence is MANVVVVGAQWGDEGKGKIVDWLSERADVIARFQGGHNAGHTLVIDGTVYKLHALPSGVVRGGKLSVIGNGVVLDPWHLVAEIETVRAQGVEITPETLMIAENTPLILPIHGELDRAREEAASKGTKIGTTGRGIGPAYEDKVGRRSVRVADLADDATLEARVDRALQHHDPLRRGLGIEAVDRDGLIAQLKEIAPAILTYAAPVWKVLNEKRKAGHRILFEGAQGALLDIDFGTYPFVTSSNVIAGQAATGVGIGPGAIDYVLGIVKAYTTRVGEGPFPTELDDADGQRLGERGHEFGTTTGRKRRCGWFDAALVRQTCATSGVNGIALTKLDVLDGFETLKICVGYDLDGKVLDYLPTAADQQGRCAPIYEEMDGWSESTEGARSWADLPGNAVKYVRRIEELIQCPVALLSTSPERDDTILVTDPFAD.

GTP is bound by residues 12–18 and 40–42; these read GDEGKGK and GHT. Asp-13 (proton acceptor) is an active-site residue. Mg(2+)-binding residues include Asp-13 and Gly-40. IMP is bound by residues 13-16, 38-41, Thr-131, Arg-145, Gln-225, Thr-240, and Arg-304; these read DEGK and NAGH. His-41 serves as the catalytic Proton donor. Residue 300-306 coordinates substrate; it reads TTTGRKR. GTP contacts are provided by residues Arg-306, 332-334, and 414-416; these read KLD and STS.

The protein belongs to the adenylosuccinate synthetase family. Homodimer. The cofactor is Mg(2+).

It localises to the cytoplasm. It catalyses the reaction IMP + L-aspartate + GTP = N(6)-(1,2-dicarboxyethyl)-AMP + GDP + phosphate + 2 H(+). The protein operates within purine metabolism; AMP biosynthesis via de novo pathway; AMP from IMP: step 1/2. Its function is as follows. Plays an important role in the de novo pathway of purine nucleotide biosynthesis. Catalyzes the first committed step in the biosynthesis of AMP from IMP. This Dinoroseobacter shibae (strain DSM 16493 / NCIMB 14021 / DFL 12) protein is Adenylosuccinate synthetase.